Here is a 1826-residue protein sequence, read N- to C-terminus: ATPase family AAA domain-containing protein 5 (1826 aa).

Serine 44 carries the phosphoserine modification. Lysine 127 participates in a covalent cross-link: Glycyl lysine isopeptide (Lys-Gly) (interchain with G-Cter in SUMO2). Disordered regions lie at residues 170 to 254, 282 to 311, 323 to 367, 398 to 572, 588 to 623, 647 to 684, and 709 to 729; these read SIED…KRAD, PAVPACVPSGPGEAVKSGSEGELSGSCEPS, AQVH…RKSN, QQFM…EPGS, RSCSTPATNALGGTESEDAQDTIPVKASTPKSARTS, KFTRISTPKKSKKSSKKSETTEEELTSQKKKANSTSKN, and VVPLRRSSRHQARSAKEKSPE. Position 215 is a phosphoserine (serine 215). A compositionally biased stretch (basic and acidic residues) spans 243 to 254; the sequence is NDSRTHATKRAD. The segment covering 298–311 has biased composition (low complexity); the sequence is SGSEGELSGSCEPS. Residues serine 351 and serine 366 each carry the phosphoserine modification. Residues 365 to 381 form an interaction with WDR48 region; that stretch reads KSNVVIQEGQLELAVLE. Residues 418–442 show a composition bias toward basic and acidic residues; the sequence is KPLEKQKDPSEKSVHEGDSSSEKII. Positions 445–456 are enriched in polar residues; it reads PNIQRVSSQGCL. A compositionally biased stretch (basic and acidic residues) spans 459–468; it reads HADRGSFPKE. Residues 469-481 are compositionally biased toward basic residues; that stretch reads KSKKPNKKGKKTR. Residues 487 to 505 are compositionally biased toward basic and acidic residues; the sequence is NREENIQKEKTAFSLKDEQ. Residues 540–559 are compositionally biased toward polar residues; the sequence is DSVQMSLCNRNKSRSSSTPT. Phosphoserine is present on residues serine 591 and serine 603. 2 positions are modified to phosphoserine: serine 727 and serine 801. Residues 965 to 1034 are disordered; it reads GKQASPQLQP…NLDPSRDSGT (70 aa). Over residues 1006–1019 the composition is skewed to basic and acidic residues; that stretch reads EEMKGRSKDLDERI. Serine 1104 is subject to Phosphoserine. 1119-1126 lines the ATP pocket; sequence GPTGVGKT. The disordered stretch occupies residues 1183 to 1216; the sequence is YNIGKSPKKLNSPGKVVTSPRKLPPSSPKTSGQK. The short motif at 1415-1419 is the LXCXE motif element; the sequence is LVCSE. Disordered regions lie at residues 1527–1552 and 1592–1611; these read PASMGHLTRKQSKDQPLRKSQKRKQK and SNPEIKTQNSGFKPHSVPQP. An interaction with RAD51 and RFC5 region spans residues 1612–1701; it reads PKTLAEKKCC…ATAEALSFTE (90 aa).

It belongs to the AAA ATPase family. As to quaternary structure, component of a heteropentameric replication factor ATAD5 RFC-like complex composed of one large subunit (ATAD5) and four small subunits (RFC2, RFC3, RFC4 and RFC5). Within the ATAD5 RFC-like complex, interacts with RFC2, RFC4 and RFC5. Within the ATAD5 RFC-like complex, interacts directly via-N terminal with RAD51; the interactions is enhanced under replication stress. Interacts with RB1 predominantly in G1 phase via its LXCXE motif. Interacts with RAD9A in growing cells. The interaction with RAD9A is reduced after exposure to DNA replication-inhibiting agents. Interacts with BRD4. Interacts with PCNA. Interacts with deubiquitinating enzyme USP1, and its associated factor, WDR48. Post-translationally, ATR may stimulate the RAD9A dissociation. In terms of tissue distribution, expressed ubiquitously in all cell lines like teratocarcinoma, cell lymphoma, lymphoma.

The protein resides in the nucleus. Functionally, has an important role in DNA replication and in maintaining genome integrity during replication stress. Involved in a RAD9A-related damage checkpoint, a pathway that is important in determining whether DNA damage is compatible with cell survival or whether it requires cell elimination by apoptosis. Modulates the RAD9A interaction with BCL2 and thereby induces DNA damage-induced apoptosis. Promotes PCNA deubiquitination by recruiting the ubiquitin-specific protease 1 (USP1) and WDR48 thereby down-regulating the error-prone damage bypass pathway. As component of the ATAD5 RFC-like complex, regulates the function of the DNA polymerase processivity factor PCNA by unloading the ring-shaped PCNA homotrimer from DNA after replication during the S phase of the cell cycle. This seems to be dependent on its ATPase activity. Plays important roles in restarting stalled replication forks under replication stress, by unloading the PCNA homotrimer from DNA and recruiting RAD51 possibly through an ATR-dependent manner. Ultimately this enables replication fork regression, breakage, and eventual fork restart. Both the PCNA unloading activity and the interaction with WDR48 are required to efficiently recruit RAD51 to stalled replication forks. Promotes the generation of MUS81-mediated single-stranded DNA-associated breaks in response to replication stress, which is an alternative pathway to restart stalled/regressed replication forks. The protein is ATPase family AAA domain-containing protein 5 (Atad5) of Mus musculus (Mouse).